The following is a 435-amino-acid chain: GPI-anchor transamidase component PIGU (435 aa).

The Cytoplasmic segment spans residues 2-3 (AA). The chain crosses the membrane as a helical span at residues 4–22 (PLVLVLVVAVTVRAALFRS). At 23–78 (SLAEFISERVEVVSPLSSWKRVVEGLSLLDLGVSPYSGAVFHETPLIIYLFHFLID) the chain is on the lumenal side. Residues 79–99 (YAELVFMITDALTAIALYFAI) traverse the membrane as a helical segment. The Cytoplasmic portion of the chain corresponds to 100 to 136 (QDFNKVVFKKQKLLLELDQYAPDVAELIRTPMEMRYI). 4 helical membrane-spanning segments follow: residues 137 to 158 (PLKVALFYLLNPYTILSCVAKS), 159 to 178 (TCAINNTLIAFFILTTIKGS), 179 to 194 (AFLSAIFLALATYQSL), and 195 to 205 (YPLTLFVPGLL). The Cytoplasmic segment spans residues 206-222 (YLLQRQYIPVKMKSKAF). A cardiolipin-binding residues include Lys-216 and Met-217. A helical membrane pass occupies residues 223-244 (WIFSWEYAMMYVGSLVVIICLS). The Lumenal portion of the chain corresponds to 245-286 (FFLLSSWDFIPAVYGFILSVPDLTPNIGLFWYFFAEMFEHFS). Residues 287–306 (LFFVCVFQINVFFYTIPLAI) traverse the membrane as a helical segment. At 307-311 (KLKEH) the chain is on the cytoplasmic side. Lys-309 is an a cardiolipin binding site. Transmembrane regions (helical) follow at residues 312–331 (PIFFMFIQIAVIAIFKSYPT) and 332–345 (VGDVALYMAFFPVW). Residues 346-354 (NHLYRFLRN) lie on the Cytoplasmic side of the membrane. The chain crosses the membrane as a helical span at residues 355-372 (IFVLTCIIIVCSLLFPVL). At 373-384 (WHLWIYAGSANS) the chain is on the lumenal side. Residues Asn-383 and Asn-385 each coordinate a 2-acyl-6-[6-phosphoethanolamine-alpha-D-mannosyl-(1-&gt;2)-6-phosphoethanolamine-alpha-D-mannosyl-(1-&gt;6)-2-phosphoethanolamine-alpha-D-mannosyl-(1-&gt;4)-alpha-D-glucosaminyl]-1-(1-radyl,2-acyl-sn-glycero-3-phospho)-1D-myo-inositol. The helical transmembrane segment at 385-406 (NFFYAITLTFNVGQILLISDYF) threads the bilayer. Residues 407–435 (YAFLRREYYLTHGLYLTAKDGTEAMLVLK) are Cytoplasmic-facing.

The protein belongs to the PIGU family. In terms of assembly, heteropentamer. Part of the GPI-anchor transamidase complex, consisting of PIGK, PIGT, PIGS, PIGU and GAA1.

The protein resides in the endoplasmic reticulum membrane. The protein operates within glycolipid biosynthesis; glycosylphosphatidylinositol-anchor biosynthesis. Functionally, component of the glycosylphosphatidylinositol-anchor (GPI-anchor) transamidase (GPI-T) complex that catalyzes the formation of the linkage between a proprotein and a GPI-anchor and participates in GPI anchored protein biosynthesis. Binds the lipid portion of GPI-anchor. May act as an organizer in the transmembrane layer to recruit other subunits, and thus is essential for assembly of the complex. This is GPI-anchor transamidase component PIGU from Homo sapiens (Human).